Here is a 379-residue protein sequence, read N- to C-terminus: 1-deoxy-D-xylulose 5-phosphate reductoisomerase (379 aa).

NADPH is bound by residues Thr-10, Gly-11, Ser-12, Ile-13, Asn-39, and Asn-121. Residue Lys-122 participates in 1-deoxy-D-xylulose 5-phosphate binding. NADPH is bound at residue Glu-123. Residue Asp-147 coordinates Mn(2+). The 1-deoxy-D-xylulose 5-phosphate site is built by Ser-148, Glu-149, Ser-173, and His-196. Glu-149 serves as a coordination point for Mn(2+). Gly-202 contacts NADPH. 1-deoxy-D-xylulose 5-phosphate contacts are provided by Ser-209, Asn-214, Lys-215, and Glu-218. Glu-218 provides a ligand contact to Mn(2+).

It belongs to the DXR family. Requires Mg(2+) as cofactor. The cofactor is Mn(2+).

It carries out the reaction 2-C-methyl-D-erythritol 4-phosphate + NADP(+) = 1-deoxy-D-xylulose 5-phosphate + NADPH + H(+). Its pathway is isoprenoid biosynthesis; isopentenyl diphosphate biosynthesis via DXP pathway; isopentenyl diphosphate from 1-deoxy-D-xylulose 5-phosphate: step 1/6. In terms of biological role, catalyzes the NADPH-dependent rearrangement and reduction of 1-deoxy-D-xylulose-5-phosphate (DXP) to 2-C-methyl-D-erythritol 4-phosphate (MEP). The polypeptide is 1-deoxy-D-xylulose 5-phosphate reductoisomerase (Chlamydia caviae (strain ATCC VR-813 / DSM 19441 / 03DC25 / GPIC) (Chlamydophila caviae)).